The chain runs to 471 residues: UDP-N-acetylmuramate--L-alanine ligase (471 aa).

114–120 (GTHGKTT) is an ATP binding site.

Belongs to the MurCDEF family.

The protein resides in the cytoplasm. It carries out the reaction UDP-N-acetyl-alpha-D-muramate + L-alanine + ATP = UDP-N-acetyl-alpha-D-muramoyl-L-alanine + ADP + phosphate + H(+). It functions in the pathway cell wall biogenesis; peptidoglycan biosynthesis. Functionally, cell wall formation. In Brucella abortus (strain S19), this protein is UDP-N-acetylmuramate--L-alanine ligase.